The following is a 940-amino-acid chain: UvrABC system protein A (940 aa).

31–38 contributes to the ATP binding site; that stretch reads GLSGSGKS. The segment at 253–280 adopts a C4-type zinc-finger fold; sequence CPICGYSMRELEPRLFSFNNPAGACPTC. ABC transporter domains are found at residues 310-587 and 607-937; these read WDRR…PESL and ANPE…RFLK. 640-647 provides a ligand contact to ATP; sequence GVSGSGKS. The C4-type zinc-finger motif lies at 740–766; that stretch reads CEACQGDGVIKVEMHFLPDIYVPCDQC.

Belongs to the ABC transporter superfamily. UvrA family. In terms of assembly, forms a heterotetramer with UvrB during the search for lesions.

The protein localises to the cytoplasm. Its function is as follows. The UvrABC repair system catalyzes the recognition and processing of DNA lesions. UvrA is an ATPase and a DNA-binding protein. A damage recognition complex composed of 2 UvrA and 2 UvrB subunits scans DNA for abnormalities. When the presence of a lesion has been verified by UvrB, the UvrA molecules dissociate. The chain is UvrABC system protein A from Escherichia coli O6:H1 (strain CFT073 / ATCC 700928 / UPEC).